A 248-amino-acid polypeptide reads, in one-letter code: uncharacterized protein (248 aa).

Residues 7-246 enclose the ABC transporter domain; that stretch reads VQLSNLSWTF…PASTILLPTS (240 aa). An ATP-binding site is contributed by 43-50; sequence GQSGSGKS.

This sequence belongs to the ABC transporter superfamily.

This is an uncharacterized protein from Mycobacterium tuberculosis (strain CDC 1551 / Oshkosh).